Here is a 360-residue protein sequence, read N- to C-terminus: Phospho-N-acetylmuramoyl-pentapeptide-transferase (360 aa).

A run of 10 helical transmembrane segments spans residues 24–44 (RAVM…PWTI), 69–89 (GTPT…TLLW), 92–112 (WANP…ALGF), 133–153 (MVWQ…LAAN), 158–178 (ILIV…GFLV), 199–219 (GLAA…AYVS), 239–259 (VAIF…FNAY), 263–283 (VFMG…VAVI), 288–308 (FVLV…MLQV), and 337–357 (QVVV…LSTL).

The protein belongs to the glycosyltransferase 4 family. MraY subfamily. Requires Mg(2+) as cofactor.

The protein localises to the cell inner membrane. It carries out the reaction UDP-N-acetyl-alpha-D-muramoyl-L-alanyl-gamma-D-glutamyl-meso-2,6-diaminopimeloyl-D-alanyl-D-alanine + di-trans,octa-cis-undecaprenyl phosphate = di-trans,octa-cis-undecaprenyl diphospho-N-acetyl-alpha-D-muramoyl-L-alanyl-D-glutamyl-meso-2,6-diaminopimeloyl-D-alanyl-D-alanine + UMP. The protein operates within cell wall biogenesis; peptidoglycan biosynthesis. In terms of biological role, catalyzes the initial step of the lipid cycle reactions in the biosynthesis of the cell wall peptidoglycan: transfers peptidoglycan precursor phospho-MurNAc-pentapeptide from UDP-MurNAc-pentapeptide onto the lipid carrier undecaprenyl phosphate, yielding undecaprenyl-pyrophosphoryl-MurNAc-pentapeptide, known as lipid I. The sequence is that of Phospho-N-acetylmuramoyl-pentapeptide-transferase from Neisseria gonorrhoeae (strain ATCC 700825 / FA 1090).